The sequence spans 158 residues: Small ribosomal subunit protein uS7 (158 aa).

Belongs to the universal ribosomal protein uS7 family. As to quaternary structure, part of the 30S ribosomal subunit. Contacts proteins S9 and S11.

One of the primary rRNA binding proteins, it binds directly to 16S rRNA where it nucleates assembly of the head domain of the 30S subunit. Is located at the subunit interface close to the decoding center, probably blocks exit of the E-site tRNA. This is Small ribosomal subunit protein uS7 from Parabacteroides distasonis (strain ATCC 8503 / DSM 20701 / CIP 104284 / JCM 5825 / NCTC 11152).